Consider the following 161-residue polypeptide: Inner membrane assembly complex subunit 17 (161 aa).

A mitochondrion-targeting transit peptide spans 1–22 (MLNPRPCVPRLLSAVARCHKPY). At 23 to 84 (STSIKSLEDL…QQQQQALKKF (62 aa)) the chain is on the mitochondrial matrix side. A helical transmembrane segment spans residues 85–107 (VRPMWIFLLMSSFFYLTGHYIWW). Residues 108–161 (KLEYDEREIELHKQVQALRQELDSAIAAKHSGKEPALSGAGAKKPKRWYLAWLW) are Mitochondrial intermembrane-facing. Positions 109 to 138 (LEYDEREIELHKQVQALRQELDSAIAAKHS) form a coiled coil.

It belongs to the INA17 family. In terms of assembly, component of the inner membrane assembly (INA) complex, composed of INA17 and INA22. Interacts with a subset of F(1)F(0)-ATP synthase subunits of the F(1)-domain and the peripheral stalk.

It is found in the mitochondrion inner membrane. Component of the INA complex (INAC) that promotes the biogenesis of mitochondrial F(1)F(0)-ATP synthase. INAC facilitates the assembly of the peripheral stalk and promotes the assembly of the catalytic F(1)-domain with the membrane-embedded F(0)-domain. This Lachancea thermotolerans (strain ATCC 56472 / CBS 6340 / NRRL Y-8284) (Yeast) protein is Inner membrane assembly complex subunit 17.